We begin with the raw amino-acid sequence, 226 residues long: Staphylococcal superantigen-like 1 (226 aa).

The signal sequence occupies residues 1–30; it reads MKFKAIAKASLALGMLATGVITSNVQSVQA.

This sequence belongs to the staphylococcal/streptococcal toxin family. Homodimer.

It localises to the secreted. In terms of biological role, mediates virulence by proteolytically cleaving host proteins, including collagens types I and IV as well as human cytokines IL8, IL17A, and IFN-gamma. The protein is Staphylococcal superantigen-like 1 of Staphylococcus aureus (strain NCTC 8325 / PS 47).